We begin with the raw amino-acid sequence, 127 residues long: Large ribosomal subunit protein bL20 (127 aa).

It belongs to the bacterial ribosomal protein bL20 family.

Its function is as follows. Binds directly to 23S ribosomal RNA and is necessary for the in vitro assembly process of the 50S ribosomal subunit. It is not involved in the protein synthesizing functions of that subunit. The polypeptide is Large ribosomal subunit protein bL20 (Streptomyces griseus subsp. griseus (strain JCM 4626 / CBS 651.72 / NBRC 13350 / KCC S-0626 / ISP 5235)).